We begin with the raw amino-acid sequence, 115 residues long: Protein V2 (115 aa).

Belongs to the geminiviridae protein AV2/V2 family. As to quaternary structure, interacts with host SGS3.

The protein localises to the host cytoplasm. Its subcellular location is the host perinuclear region. Functionally, through its interaction with host SGS3, acts as a suppressor of RNA-mediated gene silencing, also known as post-transcriptional gene silencing (PTGS), a mechanism of plant viral defense that limits the accumulation of viral RNAs. The protein is Protein V2 of Tomato yellow leaf curl China virus (TYLCCNV).